The sequence spans 486 residues: Secreted protein C (486 aa).

The signal sequence occupies residues 1-22; the sequence is MKINIILLFVGLILAFAVLSNA. The tract at residues 30-332 is disordered; that stretch reads GVNPFDNNNS…SGSHGGSSSH (303 aa). Asn-37 is a glycosylation site (N-linked (GlcNAc...) asparagine). A compositionally biased stretch (gly residues) spans 41–60; the sequence is SGSGSGSGGGSSSSGSGTGQ. Low complexity predominate over residues 61–318; that stretch reads SSGTVSSSGS…TGSSEYSSSS (258 aa). Residues Asn-73, Asn-74, Asn-83, Asn-112, Asn-129, Asn-149, and Asn-174 are each glycosylated (N-linked (GlcNAc...) asparagine).

Belongs to the Sct family.

It localises to the secreted. This is Secreted protein C from Dictyostelium discoideum (Social amoeba).